We begin with the raw amino-acid sequence, 612 residues long: Indole-3-acetic acid-amido synthetase GH3.6 (612 aa).

It belongs to the IAA-amido conjugating enzyme family. Expressed in cotyledons, stipules, true leaves, hypocotyls, and all parts of the roots. Not detected in flowers.

Catalyzes the synthesis of indole-3-acetic acid (IAA)-amino acid conjugates, providing a mechanism for the plant to cope with the presence of excess auxin. Strongly reactive with Glu, Gln, Trp, Asp, Ala, Leu, Phe, Gly, Tyr, Met, Ile and Val. Little or no product formation with His, Ser, Thr, Arg, Lys, or Cys. Also active on pyruvic and butyric acid analogs of IAA, PAA and the synthetic auxin naphthaleneacetic acid (NAA). The two chlorinated synthetic auxin herbicides 2,4-D and 3,6-dichloro-o-anisic acid (dicamba) cannot be used as substrates. Involved in auxin signal transduction. Inhibits shoot and hypocotyl cell elongation, and lateral root cell differentiation in light. This is Indole-3-acetic acid-amido synthetase GH3.6 (GH3.6) from Arabidopsis thaliana (Mouse-ear cress).